The following is a 494-amino-acid chain: Amidophosphoribosyltransferase (494 aa).

A propeptide spanning residues 1–10 (MFNYSGLNEE) is cleaved from the precursor. Catalysis depends on Cys-11, which acts as the Nucleophile. A Glutamine amidotransferase type-2 domain is found at 11 to 231 (CGVFGIWNHP…AGEYVVINDK (221 aa)). The Mg(2+) site is built by Ser-294, Asp-356, and Asp-357.

The protein in the C-terminal section; belongs to the purine/pyrimidine phosphoribosyltransferase family. Requires Mg(2+) as cofactor.

The catalysed reaction is 5-phospho-beta-D-ribosylamine + L-glutamate + diphosphate = 5-phospho-alpha-D-ribose 1-diphosphate + L-glutamine + H2O. It functions in the pathway purine metabolism; IMP biosynthesis via de novo pathway; N(1)-(5-phospho-D-ribosyl)glycinamide from 5-phospho-alpha-D-ribose 1-diphosphate: step 1/2. In terms of biological role, catalyzes the formation of phosphoribosylamine from phosphoribosylpyrophosphate (PRPP) and glutamine. This Staphylococcus aureus (strain Mu50 / ATCC 700699) protein is Amidophosphoribosyltransferase.